We begin with the raw amino-acid sequence, 516 residues long: Flagellar radial spoke protein 3 (516 aa).

Polar residues-rich tracts occupy residues 1–11 (MVQAKAQQQLY) and 62–74 (ATQT…SPAS). Disordered regions lie at residues 1 to 32 (MVQA…EDET), 60 to 90 (ADAT…TPEA), 388 to 412 (NAKW…AAEE), and 424 to 447 (AAAE…DGVE). Positions 391-412 (WEADKAEAAEKARAEAEAAAEE) are enriched in basic and acidic residues.

This sequence belongs to the flagellar radial spoke RSP3 family. Interacts with FAP91. In terms of processing, protein 3 is one of the 5 radial spoke proteins that are phosphorylated. Protein 3a might only differ from protein 3 in being unphosphorylated.

Its subcellular location is the cytoplasm. The protein localises to the cytoskeleton. It localises to the flagellum axoneme. In terms of biological role, protein 3 may attach the radial spoke to the outer doublet microtubule or is required to form a stable spoke structure. Its function is as follows. Flagellar radial spokes contribute to the regulation of dynein arm activity and thus the pattern of flagellar bending. They consist of a thin stalk, which is attached to the a subfiber of the outer doublet microtubule, and a bulbous head, which is attached to the stalk and appears to interact with the projections from the central pair of microtubules. In Chlamydomonas reinhardtii (Chlamydomonas smithii), this protein is Flagellar radial spoke protein 3.